Consider the following 78-residue polypeptide: MNVSNNSNMDHNDLAKRGESLIRKSTNRYLTTVRIAFRAKQRRFDDFDGLLEESAIKPVQRSIIELSDEQDQPDLLPG.

The protein belongs to the RNA polymerase subunit omega family. As to quaternary structure, in cyanobacteria the RNAP catalytic core is composed of 2 alpha, 1 beta, 1 beta', 1 gamma and 1 omega subunit. When a sigma factor is associated with the core the holoenzyme is formed, which can initiate transcription.

The enzyme catalyses RNA(n) + a ribonucleoside 5'-triphosphate = RNA(n+1) + diphosphate. In terms of biological role, promotes RNA polymerase assembly. Latches the N- and C-terminal regions of the beta' subunit thereby facilitating its interaction with the beta and alpha subunits. The sequence is that of DNA-directed RNA polymerase subunit omega from Prochlorococcus marinus subsp. pastoris (strain CCMP1986 / NIES-2087 / MED4).